A 611-amino-acid polypeptide reads, in one-letter code: Glutathione hydrolase proenzyme 2 (611 aa).

Over 1–42 (MSPTDTTPLLYSWDDQSRHQDPDWHKLRNYHGAWYRRISRRR) the chain is Cytoplasmic. A helical; Signal-anchor for type II membrane protein transmembrane segment spans residues 43–63 (FSQFIFAFGLMTLFVLVYSIS). The Lumenal segment spans residues 64–611 (SNLHTPTQFT…PRKYGQAAAY (548 aa)). The N-linked (GlcNAc...) asparagine glycan is linked to Asn-138. Arg-147 contacts L-glutamate. Asn-153, Asn-297, and Asn-396 each carry an N-linked (GlcNAc...) asparagine glycan. The active-site Nucleophile is Thr-420. L-glutamate contacts are provided by residues Thr-438, Asn-440, Gln-459, Asp-462, 490–491 (SS), and 512–513 (GG).

The protein belongs to the gamma-glutamyltransferase family. In terms of assembly, heterodimer composed of the light and heavy chains. The active site is located in the light chain. In terms of processing, cleaved by autocatalysis into a large and a small subunit.

It localises to the vacuole membrane. The catalysed reaction is an N-terminal (5-L-glutamyl)-[peptide] + an alpha-amino acid = 5-L-glutamyl amino acid + an N-terminal L-alpha-aminoacyl-[peptide]. It carries out the reaction glutathione + H2O = L-cysteinylglycine + L-glutamate. The enzyme catalyses an S-substituted glutathione + H2O = an S-substituted L-cysteinylglycine + L-glutamate. It functions in the pathway sulfur metabolism; glutathione metabolism. Catalyzes the transfer of the gamma-glutamyl moiety of glutathione (GSH) and other gamma-glutamyl compounds to amino acids and peptides. Major GSH-degrading enzyme, catalyzing the hydrolytic release of L-glutamate from GSH. Plays a role in the turnover of the vacuolar GSH, serving as an alternative nitrogen source during nitrogen starvation. The protein is Glutathione hydrolase proenzyme 2 (ggt2) of Schizosaccharomyces pombe (strain 972 / ATCC 24843) (Fission yeast).